The primary structure comprises 668 residues: Threonine--tRNA ligase (668 aa).

One can recognise a TGS domain in the interval 1–64 (MSQAISLTFP…TDGKIEIITR (64 aa)). Residues 245–553 (DHRKLGREMD…LIENFAGHMP (309 aa)) are catalytic. Positions 347, 398, and 530 each coordinate Zn(2+).

The protein belongs to the class-II aminoacyl-tRNA synthetase family. In terms of assembly, homodimer. It depends on Zn(2+) as a cofactor.

It is found in the cytoplasm. It carries out the reaction tRNA(Thr) + L-threonine + ATP = L-threonyl-tRNA(Thr) + AMP + diphosphate + H(+). Catalyzes the attachment of threonine to tRNA(Thr) in a two-step reaction: L-threonine is first activated by ATP to form Thr-AMP and then transferred to the acceptor end of tRNA(Thr). Also edits incorrectly charged L-seryl-tRNA(Thr). The chain is Threonine--tRNA ligase from Rhizobium etli (strain CIAT 652).